A 547-amino-acid chain; its full sequence is Chaperonin GroEL (547 aa).

Residues 30 to 33, Lys51, 87 to 91, Gly415, and Asp495 contribute to the ATP site; these read TLGP and DGTTT.

The protein belongs to the chaperonin (HSP60) family. As to quaternary structure, forms a cylinder of 14 subunits composed of two heptameric rings stacked back-to-back. Interacts with the co-chaperonin GroES.

It localises to the cytoplasm. It catalyses the reaction ATP + H2O + a folded polypeptide = ADP + phosphate + an unfolded polypeptide.. Together with its co-chaperonin GroES, plays an essential role in assisting protein folding. The GroEL-GroES system forms a nano-cage that allows encapsulation of the non-native substrate proteins and provides a physical environment optimized to promote and accelerate protein folding. The protein is Chaperonin GroEL of Shewanella pealeana (strain ATCC 700345 / ANG-SQ1).